Consider the following 157-residue polypeptide: Small ribosomal subunit protein uS7 (157 aa).

It belongs to the universal ribosomal protein uS7 family. In terms of assembly, part of the 30S ribosomal subunit. Contacts proteins S9 and S11.

Functionally, one of the primary rRNA binding proteins, it binds directly to 16S rRNA where it nucleates assembly of the head domain of the 30S subunit. Is located at the subunit interface close to the decoding center, probably blocks exit of the E-site tRNA. The sequence is that of Small ribosomal subunit protein uS7 from Delftia acidovorans (strain DSM 14801 / SPH-1).